Reading from the N-terminus, the 504-residue chain is Anaerobic nitric oxide reductase transcription regulator NorR (504 aa).

4-aspartylphosphate is present on aspartate 57. Positions 187–416 (MIGLSPGMTQ…LEHAIHRAVV (230 aa)) constitute a Sigma-54 factor interaction domain. ATP is bound by residues 215 to 222 (GETGTGKE) and 278 to 287 (ADNGTLFLDE). Positions 479–498 (WAACARMLETDVANLHRLAK) form a DNA-binding region, H-T-H motif.

It functions in the pathway nitrogen metabolism; nitric oxide reduction. Required for the expression of anaerobic nitric oxide (NO) reductase, acts as a transcriptional activator for at least the norVW operon. Activation also requires sigma-54. This Escherichia coli (strain K12 / MC4100 / BW2952) protein is Anaerobic nitric oxide reductase transcription regulator NorR.